Reading from the N-terminus, the 124-residue chain is Small ribosomal subunit protein uS13 (124 aa).

Positions 95 to 124 (GLPVRGQRTKTNARTRKGPKRTVAGKKKAR) are disordered.

It belongs to the universal ribosomal protein uS13 family. In terms of assembly, part of the 30S ribosomal subunit. Forms a loose heterodimer with protein S19. Forms two bridges to the 50S subunit in the 70S ribosome.

Functionally, located at the top of the head of the 30S subunit, it contacts several helices of the 16S rRNA. In the 70S ribosome it contacts the 23S rRNA (bridge B1a) and protein L5 of the 50S subunit (bridge B1b), connecting the 2 subunits; these bridges are implicated in subunit movement. Contacts the tRNAs in the A and P-sites. This is Small ribosomal subunit protein uS13 from Leifsonia xyli subsp. xyli (strain CTCB07).